Here is a 530-residue protein sequence, read N- to C-terminus: MEPTAPTGQARAAATKLSEAVGAALQEPQRQRRLVLVIVCVALLLDNMLYMVIVPIVPDYIAHMRGGSEGPTLVSEVWEPTLPPPTLANASAYLANTSASPTAAGSARSILRPRYPTESEDVKIGVLFASKAILQLLVNPLSGPFIDRMSYDVPLLIGLGVMFASTVMFAFAEDYATLFAARSLQGLGSAFADTSGIAMIADKYPEEPERSRALGVALAFISFGSLVAPPFGGILYEFAGKRVPFLVLAAVSLFDALLLLAVAKPFSAAARARANLPVGTPIHRLMLDPYIAVVAGALTTCNIPLAFLEPTIATWMKHTMAASEWEMGMVWLPAFVPHVLGVYLTVRLAARYPHLQWLYGALGLAVIGVSSCVVPACRSFAPLVVSLCGLCFGIALVDTALLPTLAFLVDVRHVSVYGSVYAIADISYSVAYALGPIVAGHIVHSLGFEQLSLGMGLANLLYAPVLLLLRNVGLLTRSRSERDVLLDEPPQGLYDAVRLREVQGKDGGEPCSPPGPFDGCEDDYNYYSRS.

Residues 1–33 are Cytoplasmic-facing; that stretch reads MEPTAPTGQARAAATKLSEAVGAALQEPQRQRR. The chain crosses the membrane as a helical span at residues 34–54; it reads LVLVIVCVALLLDNMLYMVIV. Residues 55-125 lie on the Lumenal, vesicle side of the membrane; that stretch reads PIVPDYIAHM…PTESEDVKIG (71 aa). 2 N-linked (GlcNAc...) asparagine glycosylation sites follow: asparagine 89 and asparagine 96. A helical transmembrane segment spans residues 126–146; the sequence is VLFASKAILQLLVNPLSGPFI. Topologically, residues 147–152 are cytoplasmic; sequence DRMSYD. The helical transmembrane segment at 153 to 173 threads the bilayer; sequence VPLLIGLGVMFASTVMFAFAE. The Lumenal, vesicle portion of the chain corresponds to 174–182; the sequence is DYATLFAAR. Residues 183 to 203 form a helical membrane-spanning segment; that stretch reads SLQGLGSAFADTSGIAMIADK. At 204 to 213 the chain is on the cytoplasmic side; it reads YPEEPERSRA. A helical transmembrane segment spans residues 214 to 234; the sequence is LGVALAFISFGSLVAPPFGGI. Residues 235 to 242 lie on the Lumenal, vesicle side of the membrane; the sequence is LYEFAGKR. The helical transmembrane segment at 243–263 threads the bilayer; that stretch reads VPFLVLAAVSLFDALLLLAVA. The Cytoplasmic segment spans residues 264 to 289; sequence KPFSAAARARANLPVGTPIHRLMLDP. The helical transmembrane segment at 290-310 threads the bilayer; sequence YIAVVAGALTTCNIPLAFLEP. Residues 311–325 are Lumenal, vesicle-facing; it reads TIATWMKHTMAASEW. Residues 326-346 form a helical membrane-spanning segment; sequence EMGMVWLPAFVPHVLGVYLTV. Residues 347–356 are Cytoplasmic-facing; the sequence is RLAARYPHLQ. A helical transmembrane segment spans residues 357 to 377; that stretch reads WLYGALGLAVIGVSSCVVPAC. The Lumenal, vesicle portion of the chain corresponds to 378–388; the sequence is RSFAPLVVSLC. A helical transmembrane segment spans residues 389 to 409; it reads GLCFGIALVDTALLPTLAFLV. At 410 to 422 the chain is on the cytoplasmic side; the sequence is DVRHVSVYGSVYA. Residues 423-443 traverse the membrane as a helical segment; sequence IADISYSVAYALGPIVAGHIV. At 444 to 447 the chain is on the lumenal, vesicle side; that stretch reads HSLG. Residues 448-468 traverse the membrane as a helical segment; that stretch reads FEQLSLGMGLANLLYAPVLLL. Residues 469–530 lie on the Cytoplasmic side of the membrane; it reads LRNVGLLTRS…EDDYNYYSRS (62 aa). Positions 471 to 530 are mediates interaction with SEC14L1; it reads NVGLLTRSRSERDVLLDEPPQGLYDAVRLREVQGKDGGEPCSPPGPFDGCEDDYNYYSRS. A disordered region spans residues 504–530; the sequence is GKDGGEPCSPPGPFDGCEDDYNYYSRS.

Belongs to the major facilitator superfamily. Vesicular transporter family. In terms of assembly, interacts with SEC14L1. As to expression, high expression in all major cholinergic cell groups, including peripheral postganglionic parasympathetic cells, preganglionic sympathetic and parasympathetic cells, ventral spinal cord and brainstem motoneurons, cell groups in the basal forebrain, the habenula and the corpus striatum. Weakly expressed in the cortex and hippocampus.

The protein localises to the cytoplasmic vesicle. The protein resides in the secretory vesicle. Its subcellular location is the synaptic vesicle membrane. The catalysed reaction is acetylcholine(out) + 2 H(+)(in) = acetylcholine(in) + 2 H(+)(out). It catalyses the reaction choline(in) + 2 H(+)(out) = choline(out) + 2 H(+)(in). The enzyme catalyses serotonin(in) + 2 H(+)(out) = serotonin(out) + 2 H(+)(in). Its activity is regulated as follows. Potently inhibited by L-vesamicol. Electrogenic antiporter that exchanges one cholinergic neurotransmitter, acetylcholine or choline, with two intravesicular protons across the membrane of synaptic vesicles. Uses the electrochemical proton gradient established by the V-type proton-pump ATPase to store neurotransmitters inside the vesicles prior to their release via exocytosis. Determines cholinergic vesicular quantal size at presynaptic nerve terminals in developing neuro-muscular junctions with an impact on motor neuron differentiation and innervation pattern. Part of forebrain cholinergic system, regulates hippocampal synapse transmissions that underlie spatial memory formation. Can transport serotonin. This Rattus norvegicus (Rat) protein is Vesicular acetylcholine transporter (Slc18a3).